The primary structure comprises 124 residues: UPF0225 protein SCO1677 (124 aa).

This sequence belongs to the UPF0225 family.

The protein is UPF0225 protein SCO1677 of Streptomyces coelicolor (strain ATCC BAA-471 / A3(2) / M145).